Reading from the N-terminus, the 4568-residue chain is Dynein beta chain, flagellar outer arm (4568 aa).

The stem stretch occupies residues 1–1880 (MAEDEGMTAA…QVNICDAEIA (1880 aa)). Coiled-coil stretches lie at residues 277–293 (FQRL…EAND), 1158–1175 (EEAA…RKAL), 1372–1400 (KIDV…RNYD), 1614–1650 (EACT…RVAF), and 1778–1825 (QEIN…RKKL). The tract at residues 1144 to 1166 (GVEEEPEYHPDQDPEEAAAKKAA) is disordered. Positions 1150–1166 (EYHPDQDPEEAAAKKAA) are enriched in basic and acidic residues. AAA stretches follow at residues 1881-2102 (YSYE…TLYV), 2164-2385 (EAAH…RNFK), 2493-2738 (QYIP…ITQG), and 2841-3090 (EYNE…FRRY). ATP contacts are provided by residues 1919 to 1926 (GPAGTGKT), 2202 to 2209 (GAAGCGKT), and 2530 to 2537 (GNTGTGKS). A coiled-coil region spans residues 2831-2848 (LRKTLEDKLREYNESNAV). 2879 to 2886 (GVGGSGKQ) lines the ATP pocket. 3 coiled-coil regions span residues 3106–3162 (KMLL…DELI), 3339–3425 (KRAA…RLES), and 3648–3728 (HERP…KARE). The interval 3106-3425 (KMLLQLKRDD…WGAEIKRLES (320 aa)) is stalk. 2 AAA regions span residues 3481–3711 (LTDD…EIEE) and 3937–4172 (MGRF…TANN).

Belongs to the dynein heavy chain family. As to quaternary structure, consists of at least 3 heavy chains (alpha, beta and gamma), 2 intermediate chains and 8 light chains.

It is found in the cell projection. It localises to the cilium. The protein resides in the flagellum. Its subcellular location is the cytoplasm. The protein localises to the cytoskeleton. It is found in the flagellum axoneme. Force generating protein of eukaryotic cilia and flagella. Produces force towards the minus ends of microtubules. Dynein has ATPase activity; the force-producing power stroke is thought to occur on release of ADP. This is Dynein beta chain, flagellar outer arm (ODA4) from Chlamydomonas reinhardtii (Chlamydomonas smithii).